Here is a 419-residue protein sequence, read N- to C-terminus: 2-amino-3-ketobutyrate coenzyme A ligase, mitochondrial (419 aa).

The N-terminal 21 residues, 1 to 21, are a transit peptide targeting the mitochondrion; the sequence is MWAGRVLHAALSRAPRESRAQ. K45 is modified (N6-acetyllysine; alternate). K45 carries the N6-succinyllysine; alternate modification. 134–135 contacts pyridoxal 5'-phosphate; sequence CF. A substrate-binding site is contributed by H159. The residue at position 187 (K187) is an N6-acetyllysine; alternate. K187 is subject to N6-succinyllysine; alternate. Pyridoxal 5'-phosphate-binding positions include S206, 231–234, 262–265, and 295–296; these read DESH, TLGK, and SN. K265 is subject to N6-(pyridoxal phosphate)lysine. 2 positions are modified to N6-succinyllysine: K326 and K368. K383 carries the post-translational modification N6-acetyllysine; alternate. K383 carries the post-translational modification N6-succinyllysine; alternate. A substrate-binding site is contributed by R389.

The protein belongs to the class-II pyridoxal-phosphate-dependent aminotransferase family. Pyridoxal 5'-phosphate serves as cofactor.

It localises to the mitochondrion. Its subcellular location is the nucleus. The catalysed reaction is glycine + acetyl-CoA = (2S)-2-amino-3-oxobutanoate + CoA. Its pathway is amino-acid degradation; L-threonine degradation via oxydo-reductase pathway; glycine from L-threonine: step 2/2. Pyridoxal phosphate (PLP) dependent enzyme, which catalyzes the cleavage of 2-amino-3-oxobutanoate to glycine and acetyl-CoA. Catalyzes the second reaction step on the main metabolic degradation pathway for L-threonine. The chain is 2-amino-3-ketobutyrate coenzyme A ligase, mitochondrial (GCAT) from Bos taurus (Bovine).